The chain runs to 201 residues: MSRYRGPRFKKIRRLGALPGLTSKKPRAGSNLRNQLRPGKKSQYRIRLEEKQKLRFHYGLTEQQLLKYVRIAGKAKGSTGQVLLQLLEMRLDNILFRLGMASTIPQARQLVNHRHILVNGRIVDIPSYRCKPRDIIRVKDEQKSKSLVQNYLDSSSREELPKHLTLHPFQYKGSVNQIIDSKCVGLKINELLVVEYYSRQT.

The tract at residues 23 to 42 is disordered; sequence SKKPRAGSNLRNQLRPGKKS. The 63-residue stretch at 89 to 151 folds into the S4 RNA-binding domain; that stretch reads MRLDNILFRL…QKSKSLVQNY (63 aa).

It belongs to the universal ribosomal protein uS4 family. Part of the 30S ribosomal subunit. Contacts protein S5. The interaction surface between S4 and S5 is involved in control of translational fidelity.

It localises to the plastid. It is found in the chloroplast. In terms of biological role, one of the primary rRNA binding proteins, it binds directly to 16S rRNA where it nucleates assembly of the body of the 30S subunit. Functionally, with S5 and S12 plays an important role in translational accuracy. This Morus indica (Mulberry) protein is Small ribosomal subunit protein uS4c (rps4).